Reading from the N-terminus, the 274-residue chain is MEIYKKIYNSLLKLKEKNPLIHHITNYVTVNDCANIVLAIGASPVMADDIREVEDMVSIASALVINIGTLNKKTVKSMFLAGKKANELNIPVILDPVGVGATKYRTSIALELLEEIKFSVVRGNISEVKVLSGMNASTKGVDAESWDETNPIEERIRLVKSLSEKYNAVIGITGEKDVIGFKEEVYTVENGSSIMAKITGAGCMCTSVIASYCGAEENYLQATLSGVVSMGIAGEIAYEKTKNLGPSSFRTALIDSIYNLEESSFNERGKVYNA.

Substrate is bound at residue Met-46. ATP is bound by residues Arg-122 and Thr-173. Gly-200 contacts substrate.

The protein belongs to the Thz kinase family. It depends on Mg(2+) as a cofactor.

The catalysed reaction is 5-(2-hydroxyethyl)-4-methylthiazole + ATP = 4-methyl-5-(2-phosphooxyethyl)-thiazole + ADP + H(+). It functions in the pathway cofactor biosynthesis; thiamine diphosphate biosynthesis; 4-methyl-5-(2-phosphoethyl)-thiazole from 5-(2-hydroxyethyl)-4-methylthiazole: step 1/1. Catalyzes the phosphorylation of the hydroxyl group of 4-methyl-5-beta-hydroxyethylthiazole (THZ). This Clostridium tetani (strain Massachusetts / E88) protein is Hydroxyethylthiazole kinase.